The following is a 468-amino-acid chain: Argininosuccinate lyase (468 aa).

The protein belongs to the lyase 1 family. Argininosuccinate lyase subfamily.

It localises to the cytoplasm. It carries out the reaction 2-(N(omega)-L-arginino)succinate = fumarate + L-arginine. The protein operates within amino-acid biosynthesis; L-arginine biosynthesis; L-arginine from L-ornithine and carbamoyl phosphate: step 3/3. In Paraburkholderia phymatum (strain DSM 17167 / CIP 108236 / LMG 21445 / STM815) (Burkholderia phymatum), this protein is Argininosuccinate lyase.